Here is a 96-residue protein sequence, read N- to C-terminus: Co-chaperonin GroES (96 aa).

The protein belongs to the GroES chaperonin family. In terms of assembly, heptamer of 7 subunits arranged in a ring. Interacts with the chaperonin GroEL.

The protein resides in the cytoplasm. Functionally, together with the chaperonin GroEL, plays an essential role in assisting protein folding. The GroEL-GroES system forms a nano-cage that allows encapsulation of the non-native substrate proteins and provides a physical environment optimized to promote and accelerate protein folding. GroES binds to the apical surface of the GroEL ring, thereby capping the opening of the GroEL channel. This Polaromonas sp. (strain JS666 / ATCC BAA-500) protein is Co-chaperonin GroES.